Here is a 570-residue protein sequence, read N- to C-terminus: Dihydroxy-acid dehydratase (570 aa).

A [2Fe-2S] cluster-binding site is contributed by Cys-61. Residue Asp-94 coordinates Mg(2+). Cys-135 lines the [2Fe-2S] cluster pocket. Asp-136 and Lys-137 together coordinate Mg(2+). An N6-carboxylysine modification is found at Lys-137. A [2Fe-2S] cluster-binding site is contributed by Cys-207. Glu-459 serves as a coordination point for Mg(2+). The active-site Proton acceptor is Ser-485.

Belongs to the IlvD/Edd family. Homodimer. Requires [2Fe-2S] cluster as cofactor. Mg(2+) serves as cofactor.

The enzyme catalyses (2R)-2,3-dihydroxy-3-methylbutanoate = 3-methyl-2-oxobutanoate + H2O. It catalyses the reaction (2R,3R)-2,3-dihydroxy-3-methylpentanoate = (S)-3-methyl-2-oxopentanoate + H2O. The protein operates within amino-acid biosynthesis; L-isoleucine biosynthesis; L-isoleucine from 2-oxobutanoate: step 3/4. It participates in amino-acid biosynthesis; L-valine biosynthesis; L-valine from pyruvate: step 3/4. Functionally, functions in the biosynthesis of branched-chain amino acids. Catalyzes the dehydration of (2R,3R)-2,3-dihydroxy-3-methylpentanoate (2,3-dihydroxy-3-methylvalerate) into 2-oxo-3-methylpentanoate (2-oxo-3-methylvalerate) and of (2R)-2,3-dihydroxy-3-methylbutanoate (2,3-dihydroxyisovalerate) into 2-oxo-3-methylbutanoate (2-oxoisovalerate), the penultimate precursor to L-isoleucine and L-valine, respectively. The protein is Dihydroxy-acid dehydratase of Lactococcus lactis subsp. lactis (strain IL1403) (Streptococcus lactis).